The sequence spans 457 residues: Proton-translocating ferredoxin:NAD(+) oxidoreductase complex subunit C (457 aa).

4Fe-4S ferredoxin-type domains follow at residues 353 to 386 (TKND…MLSI) and 396 to 427 (AKEE…YIRY). Cys-365, Cys-368, Cys-371, Cys-375, Cys-405, Cys-408, Cys-411, and Cys-415 together coordinate [4Fe-4S] cluster. Positions 433-457 (RAAGEREKAKAAKAKEKKEKEEVLK) are disordered.

Belongs to the 4Fe4S bacterial-type ferredoxin family. RnfC subfamily. In terms of assembly, the complex is composed of six subunits: RnfA, RnfB, RnfC, RnfD, RnfE and RnfG. The cofactor is [4Fe-4S] cluster.

It localises to the cell membrane. In terms of biological role, part of a membrane-bound complex that couples electron transfer with translocation of ions across the membrane. Couples electron transfer from reduced ferredoxin to NAD(+) with translocation of H(+) out of the cell. Essential for energy conservation during autotrophic growth. Contributes to ATP synthesis during heterotrophic growth. The sequence is that of Proton-translocating ferredoxin:NAD(+) oxidoreductase complex subunit C from Clostridium ljungdahlii (strain ATCC 55383 / DSM 13528 / PETC).